The primary structure comprises 345 residues: Cell division control protein 2 homolog 2 (345 aa).

Residues 1–44 (MQVQVQEGQTACDGSLRPLPSAGPASFVPRSLRPAPLRGTSTPD) form a disordered region. The 283-residue stretch at 46–328 (YSRIEKVGEG…AYEALQHSYF (283 aa)) folds into the Protein kinase domain. ATP is bound by residues 52-60 (VGEGSYGIV) and lysine 75. Phosphoserine is present on serine 56. The residue at position 57 (tyrosine 57) is a Phosphotyrosine. Aspartate 168 (proton acceptor) is an active-site residue.

This sequence belongs to the protein kinase superfamily. CMGC Ser/Thr protein kinase family. CDC2/CDKX subfamily. As to quaternary structure, forms a stable but non-covalent complex with a regulatory subunit and with a cyclin.

The catalysed reaction is L-seryl-[protein] + ATP = O-phospho-L-seryl-[protein] + ADP + H(+). It catalyses the reaction L-threonyl-[protein] + ATP = O-phospho-L-threonyl-[protein] + ADP + H(+). Phosphorylation at Ser-56 or Tyr-57 inactivates the enzyme. Probably involved in the control of the cell cycle. The chain is Cell division control protein 2 homolog 2 (CRK2) from Trypanosoma brucei brucei.